Here is a 452-residue protein sequence, read N- to C-terminus: Cobyrinate a,c-diamide synthase (452 aa).

The 186-residue stretch at 244-429 (RIAVARDRAF…LHLHWGTQAW (186 aa)) folds into the GATase cobBQ-type domain. Cys-325 (nucleophile) is an active-site residue.

Belongs to the CobB/CbiA family. Mg(2+) is required as a cofactor.

The enzyme catalyses cob(II)yrinate + 2 L-glutamine + 2 ATP + 2 H2O = cob(II)yrinate a,c diamide + 2 L-glutamate + 2 ADP + 2 phosphate + 2 H(+). The protein operates within cofactor biosynthesis; adenosylcobalamin biosynthesis; cob(II)yrinate a,c-diamide from sirohydrochlorin (anaerobic route): step 10/10. Its function is as follows. Catalyzes the ATP-dependent amidation of the two carboxylate groups at positions a and c of cobyrinate, using either L-glutamine or ammonia as the nitrogen source. The polypeptide is Cobyrinate a,c-diamide synthase (Gloeobacter violaceus (strain ATCC 29082 / PCC 7421)).